Consider the following 177-residue polypeptide: Large ribosomal subunit protein uL10 (177 aa).

Belongs to the universal ribosomal protein uL10 family. Part of the ribosomal stalk of the 50S ribosomal subunit. The N-terminus interacts with L11 and the large rRNA to form the base of the stalk. The C-terminus forms an elongated spine to which L12 dimers bind in a sequential fashion forming a multimeric L10(L12)X complex.

In terms of biological role, forms part of the ribosomal stalk, playing a central role in the interaction of the ribosome with GTP-bound translation factors. The polypeptide is Large ribosomal subunit protein uL10 (Xanthomonas campestris pv. campestris (strain 8004)).